Consider the following 341-residue polypeptide: tRNA N6-adenosine threonylcarbamoyltransferase (341 aa).

Fe cation-binding residues include His114 and His118. Substrate-binding positions include 136-140, Asp170, Gly183, Asp187, and Asn275; that span reads LVSGG. Residue Asp303 participates in Fe cation binding.

Belongs to the KAE1 / TsaD family. Fe(2+) serves as cofactor.

Its subcellular location is the cytoplasm. The enzyme catalyses L-threonylcarbamoyladenylate + adenosine(37) in tRNA = N(6)-L-threonylcarbamoyladenosine(37) in tRNA + AMP + H(+). In terms of biological role, required for the formation of a threonylcarbamoyl group on adenosine at position 37 (t(6)A37) in tRNAs that read codons beginning with adenine. Is involved in the transfer of the threonylcarbamoyl moiety of threonylcarbamoyl-AMP (TC-AMP) to the N6 group of A37, together with TsaE and TsaB. TsaD likely plays a direct catalytic role in this reaction. The polypeptide is tRNA N6-adenosine threonylcarbamoyltransferase (Mycobacterium avium (strain 104)).